A 222-amino-acid chain; its full sequence is UPF0758 protein HSM_0009 (222 aa).

The MPN domain maps to 99–222 (QEFTSPDTVR…YFSFAEQGWI (124 aa)). Residues His171, His173, and Asp184 each coordinate Zn(2+). The short motif at 171 to 184 (HNHPSGVSTPSMAD) is the JAMM motif element.

Belongs to the UPF0758 family.

In Histophilus somni (strain 2336) (Haemophilus somnus), this protein is UPF0758 protein HSM_0009.